Reading from the N-terminus, the 388-residue chain is Succinate--CoA ligase [ADP-forming] subunit beta (388 aa).

An ATP-grasp domain is found at lysine 9–glutamate 244. Residues lysine 46, glycine 53–glycine 55, glutamate 99, cysteine 102, and glutamate 107 each bind ATP. Mg(2+)-binding residues include asparagine 199 and aspartate 213. Substrate is bound by residues asparagine 264 and glycine 321–methionine 323.

This sequence belongs to the succinate/malate CoA ligase beta subunit family. As to quaternary structure, heterotetramer of two alpha and two beta subunits. Requires Mg(2+) as cofactor.

It carries out the reaction succinate + ATP + CoA = succinyl-CoA + ADP + phosphate. The enzyme catalyses GTP + succinate + CoA = succinyl-CoA + GDP + phosphate. It participates in carbohydrate metabolism; tricarboxylic acid cycle; succinate from succinyl-CoA (ligase route): step 1/1. Functionally, succinyl-CoA synthetase functions in the citric acid cycle (TCA), coupling the hydrolysis of succinyl-CoA to the synthesis of either ATP or GTP and thus represents the only step of substrate-level phosphorylation in the TCA. The beta subunit provides nucleotide specificity of the enzyme and binds the substrate succinate, while the binding sites for coenzyme A and phosphate are found in the alpha subunit. The polypeptide is Succinate--CoA ligase [ADP-forming] subunit beta (Staphylococcus epidermidis (strain ATCC 35984 / DSM 28319 / BCRC 17069 / CCUG 31568 / BM 3577 / RP62A)).